Consider the following 219-residue polypeptide: RNA chaperone ProQ (219 aa).

A disordered region spans residues 102 to 160; sequence TLKESQDKAKAKRAERSKDEGDAADKAPRKPKRKPQPQARRDAKPAAKDKPKAAPKAPA. Basic and acidic residues-rich tracts occupy residues 105–129 and 140–153; these read ESQD…DKAP and ARRD…DKPK.

The protein belongs to the ProQ family.

The protein localises to the cytoplasm. Its function is as follows. RNA chaperone with significant RNA binding, RNA strand exchange and RNA duplexing activities. This chain is RNA chaperone ProQ, found in Shewanella amazonensis (strain ATCC BAA-1098 / SB2B).